A 236-amino-acid polypeptide reads, in one-letter code: Ribose-5-phosphate isomerase A (236 aa).

Residues 29 to 32 (SGST), 86 to 89 (DGAD), and 99 to 102 (KGGG) contribute to the substrate site. The active-site Proton acceptor is the Glu-108. Lys-126 contributes to the substrate binding site.

Belongs to the ribose 5-phosphate isomerase family. As to quaternary structure, homodimer.

It catalyses the reaction aldehydo-D-ribose 5-phosphate = D-ribulose 5-phosphate. It participates in carbohydrate degradation; pentose phosphate pathway; D-ribose 5-phosphate from D-ribulose 5-phosphate (non-oxidative stage): step 1/1. In terms of biological role, catalyzes the reversible conversion of ribose-5-phosphate to ribulose 5-phosphate. The chain is Ribose-5-phosphate isomerase A from Prochlorococcus marinus (strain NATL2A).